The following is a 172-amino-acid chain: 3-phenylpropionate/cinnamic acid dioxygenase subunit beta (172 aa).

The protein belongs to the bacterial ring-hydroxylating dioxygenase beta subunit family. This dioxygenase system consists of four proteins: the two subunits of the hydroxylase component (HcaE and HcaF), a ferredoxin (HcaC) and a ferredoxin reductase (HcaD).

It catalyses the reaction 3-phenylpropanoate + NADH + O2 + H(+) = 3-(cis-5,6-dihydroxycyclohexa-1,3-dien-1-yl)propanoate + NAD(+). The catalysed reaction is (E)-cinnamate + NADH + O2 + H(+) = (2E)-3-(cis-5,6-dihydroxycyclohexa-1,3-dien-1-yl)prop-2-enoate + NAD(+). Its pathway is aromatic compound metabolism; 3-phenylpropanoate degradation. Its function is as follows. Part of the multicomponent 3-phenylpropionate dioxygenase. Converts 3-phenylpropionic acid (PP) and cinnamic acid (CI) into 3-phenylpropionate-dihydrodiol (PP-dihydrodiol) and cinnamic acid-dihydrodiol (CI-dihydrodiol), respectively. The sequence is that of 3-phenylpropionate/cinnamic acid dioxygenase subunit beta from Escherichia coli O139:H28 (strain E24377A / ETEC).